The sequence spans 189 residues: uncharacterized protein (189 aa).

The signal sequence occupies residues 1 to 19; that stretch reads MNKLTILFLILALISVIYA. The tract at residues 24 to 189 is disordered; sequence PSSSEDSSSN…GSGSSGTVYY (166 aa). Residues 25–69 show a composition bias toward low complexity; the sequence is SSSEDSSSNDSNSQVTGSQSYSGSQSDSNSGSESHTINTGSSYSG. Residues 70–101 are compositionally biased toward gly residues; the sequence is SGSGSSGISGGSGSGSGSGSGSGSGSGSGSGA. Low complexity predominate over residues 102 to 142; it reads VSGSQSGSGAVSGSQSGSGAVSGSQSGVQTGSQSGAGSASG. Residues 144–157 show a composition bias toward polar residues; it reads FTGNPSGSQSQEIN. A compositionally biased stretch (gly residues) spans 165–183; it reads SGSGAPTGAATGSGSGSGS.

This is an uncharacterized protein from Dictyostelium discoideum (Social amoeba).